Here is a 465-residue protein sequence, read N- to C-terminus: Glutamate--tRNA ligase (465 aa).

The 'HIGH' region signature appears at 11 to 21 (PSPTGYLHIGG). The 'KMSKS' region signature appears at 243-247 (KLSKR). Residue lysine 246 participates in ATP binding.

It belongs to the class-I aminoacyl-tRNA synthetase family. Glutamate--tRNA ligase type 1 subfamily. As to quaternary structure, monomer.

Its subcellular location is the cytoplasm. It carries out the reaction tRNA(Glu) + L-glutamate + ATP = L-glutamyl-tRNA(Glu) + AMP + diphosphate. Its function is as follows. Catalyzes the attachment of glutamate to tRNA(Glu) in a two-step reaction: glutamate is first activated by ATP to form Glu-AMP and then transferred to the acceptor end of tRNA(Glu). This chain is Glutamate--tRNA ligase, found in Aromatoleum aromaticum (strain DSM 19018 / LMG 30748 / EbN1) (Azoarcus sp. (strain EbN1)).